A 37-amino-acid polypeptide reads, in one-letter code: Large ribosomal subunit protein bL36 (37 aa).

The protein belongs to the bacterial ribosomal protein bL36 family.

This Brevibacillus brevis (strain 47 / JCM 6285 / NBRC 100599) protein is Large ribosomal subunit protein bL36.